A 578-amino-acid chain; its full sequence is Triokinase/FMN cyclase (578 aa).

Residues 9-336 (SVEGCAGDAL…IDAETNAKAW (328 aa)) enclose the DhaK domain. Residues 56–59 (GSGH), K109, and D114 contribute to the dihydroxyacetone site. The active-site Tele-hemiaminal-histidine intermediate is H221. In terms of domain architecture, DhaL spans 372–571 (KQMTLVLDRI…AAAIFRAILE (200 aa)). Residues 401–404 (DGDC), 446–447 (SS), G486, and 494–495 (TM) contribute to the ATP site. Phosphoserine is present on residues S511 and S545. An ATP-binding site is contributed by 556 to 558 (DPG).

This sequence belongs to the dihydroxyacetone kinase (DAK) family. Homodimer. Interacts with IFIH1 (via the CARD domains), the interaction is inhibited by viral infection. Requires Mg(2+) as cofactor. The cofactor is Mn(2+). Co(2+) is required as a cofactor.

It catalyses the reaction dihydroxyacetone + ATP = dihydroxyacetone phosphate + ADP + H(+). The catalysed reaction is D-glyceraldehyde + ATP = D-glyceraldehyde 3-phosphate + ADP + H(+). It carries out the reaction FAD = riboflavin cyclic-4',5'-phosphate + AMP + H(+). With respect to regulation, each activity is inhibited by the substrate(s) of the other. Functionally, catalyzes both the phosphorylation of dihydroxyacetone and of glyceraldehyde, and the splitting of ribonucleoside diphosphate-X compounds among which FAD is the best substrate. Represses IFIH1-mediated cellular antiviral response. This Rattus norvegicus (Rat) protein is Triokinase/FMN cyclase (Tkfc).